The primary structure comprises 214 residues: Large ribosomal subunit protein uL3 (214 aa).

Residues Phe129 to Phe157 form a disordered region.

It belongs to the universal ribosomal protein uL3 family. In terms of assembly, part of the 50S ribosomal subunit. Forms a cluster with proteins L14 and L19.

Its function is as follows. One of the primary rRNA binding proteins, it binds directly near the 3'-end of the 23S rRNA, where it nucleates assembly of the 50S subunit. This chain is Large ribosomal subunit protein uL3, found in Synechococcus sp. (strain JA-2-3B'a(2-13)) (Cyanobacteria bacterium Yellowstone B-Prime).